The following is a 177-amino-acid chain: Adenine phosphoribosyltransferase (177 aa).

It belongs to the purine/pyrimidine phosphoribosyltransferase family. As to quaternary structure, homodimer.

It localises to the cytoplasm. The enzyme catalyses AMP + diphosphate = 5-phospho-alpha-D-ribose 1-diphosphate + adenine. It functions in the pathway purine metabolism; AMP biosynthesis via salvage pathway; AMP from adenine: step 1/1. Catalyzes a salvage reaction resulting in the formation of AMP, that is energically less costly than de novo synthesis. The protein is Adenine phosphoribosyltransferase of Mycoplasma pneumoniae (strain ATCC 29342 / M129 / Subtype 1) (Mycoplasmoides pneumoniae).